We begin with the raw amino-acid sequence, 475 residues long: MGSVGSDNTHIFLVCYPAQGHINPMLRLGKYLAAKGLLVTFSTTEDYGNKMRNANGIVDNHPTPVGNGFIRFEFFDDSLPDPDDPRRTNLEFYVPLLEKVGKELVTGMIKKHGEEGGARVSCLVNNPFIPWVCDVATELGIPCATLWIQSCAVFSAYFHYNAETVKFPTEAEPELDVQLPSTPLLKHDEIPSFLHPFDPYAILGRAILGQFKKLSKSSYILMDTIQELEPEIVEEMSKVCLVKPVGPLFKIPEATNTTIRGDLIKADDCLDWLSSKPPASVVYISFGSIVYLKQEQVDEIAHGLLSSGVSFLWVMRPPRKAAGVDMHVLPEGFLEKVGDNGKLVQWSPQEQVLAHPSLACFLTHCGWNSSVEALTLGVPVVTFPQWGDQVTNAKYLVDVFGVGLRLCRGVAENRLVLRDEVEKCLLEATVGEKAVQLKHNALKWKKVAEEAVAEGGSSQRNLHDFIDEIARTSIA.

It belongs to the UDP-glycosyltransferase family.

In Fragaria ananassa (Strawberry), this protein is Putative UDP-glucose glucosyltransferase.